Reading from the N-terminus, the 177-residue chain is Tubulin beta chain (177 aa).

The disordered stretch occupies residues 156-177 (YQDATAEEEGEFDEEEGDEEAA). Over residues 160–177 (TAEEEGEFDEEEGDEEAA) the composition is skewed to acidic residues.

This sequence belongs to the tubulin family. Dimer of alpha and beta chains. A typical microtubule is a hollow water-filled tube with an outer diameter of 25 nm and an inner diameter of 15 nM. Alpha-beta heterodimers associate head-to-tail to form protofilaments running lengthwise along the microtubule wall with the beta-tubulin subunit facing the microtubule plus end conferring a structural polarity. Microtubules usually have 13 protofilaments but different protofilament numbers can be found in some organisms and specialized cells. Mg(2+) serves as cofactor.

The protein resides in the cytoplasm. It is found in the cytoskeleton. Tubulin is the major constituent of microtubules, a cylinder consisting of laterally associated linear protofilaments composed of alpha- and beta-tubulin heterodimers. Microtubules grow by the addition of GTP-tubulin dimers to the microtubule end, where a stabilizing cap forms. Below the cap, tubulin dimers are in GDP-bound state, owing to GTPase activity of alpha-tubulin. This Lytechinus pictus (Painted sea urchin) protein is Tubulin beta chain.